The primary structure comprises 133 residues: NADPH-dependent 7-cyano-7-deazaguanine reductase (133 aa).

Catalysis depends on Cys-49, which acts as the Thioimide intermediate. Catalysis depends on Asp-56, which acts as the Proton donor. Substrate is bound by residues Ile-71–Leu-73 and His-90–Glu-91.

The protein belongs to the GTP cyclohydrolase I family. QueF type 1 subfamily.

It is found in the cytoplasm. The enzyme catalyses 7-aminomethyl-7-carbaguanine + 2 NADP(+) = 7-cyano-7-deazaguanine + 2 NADPH + 3 H(+). Its pathway is tRNA modification; tRNA-queuosine biosynthesis. Functionally, catalyzes the NADPH-dependent reduction of 7-cyano-7-deazaguanine (preQ0) to 7-aminomethyl-7-deazaguanine (preQ1). The sequence is that of NADPH-dependent 7-cyano-7-deazaguanine reductase from Leptospira interrogans serogroup Icterohaemorrhagiae serovar copenhageni (strain Fiocruz L1-130).